Reading from the N-terminus, the 217-residue chain is MTHDAAIGRLIKARTISDAWYRGLNVIWNHGSLITDERGSQIREFMNLMVVIEDPYSNEIPEDSAWNHERLEEYAKQLITGENAQDFEYTYGQRLRNWDGKVDQIEYVIEKLTNNKTTRRATAVTWVPTIDTKVDEVPCMIIDDFKIRDDTVHLTTLFRSHDFAGAYPANLYGLSKLLEYVADKVGLAPGTITTMSVSAHIYDHDWDKIEKIIKGVQ.

Residue Cys-139 is part of the active site.

Belongs to the thymidylate synthase family. Archaeal-type ThyA subfamily. As to quaternary structure, monomer.

It localises to the cytoplasm. Its pathway is pyrimidine metabolism; dTTP biosynthesis. Functionally, may catalyze the biosynthesis of dTMP using an unknown cosubstrate. This is Putative thymidylate synthase from Methanococcoides burtonii (strain DSM 6242 / NBRC 107633 / OCM 468 / ACE-M).